A 578-amino-acid polypeptide reads, in one-letter code: CTP synthase 2 (578 aa).

A Glutamine amidotransferase type-1 domain is found at 300 to 553 (SIALVGKYTK…MLAASGKLNT (254 aa)). Active-site for GATase activity residues include cysteine 399, histidine 526, and glutamate 528.

It belongs to the CTP synthase family.

It carries out the reaction UTP + L-glutamine + ATP + H2O = CTP + L-glutamate + ADP + phosphate + 2 H(+). It functions in the pathway pyrimidine metabolism; CTP biosynthesis via de novo pathway; CTP from UDP: step 2/2. Functionally, catalyzes the ATP-dependent amination of UTP to CTP with either L-glutamine or ammonia as the source of nitrogen. Constitutes the rate-limiting enzyme in the synthesis of cytosine nucleotides. The chain is CTP synthase 2 (ctps2) from Xenopus laevis (African clawed frog).